The sequence spans 168 residues: Transcriptional repressor NrdR (168 aa).

Residues 3–34 (CPYCGFAQDRVVDSRESKEADSIRRRRECERC) fold into a zinc finger. The region spanning 49–139 (YMVVKKDGRR…VYRDFKDVNE (91 aa)) is the ATP-cone domain.

It belongs to the NrdR family. It depends on Zn(2+) as a cofactor.

Negatively regulates transcription of bacterial ribonucleotide reductase nrd genes and operons by binding to NrdR-boxes. The polypeptide is Transcriptional repressor NrdR (Acidobacterium capsulatum (strain ATCC 51196 / DSM 11244 / BCRC 80197 / JCM 7670 / NBRC 15755 / NCIMB 13165 / 161)).